The following is a 173-amino-acid chain: DASH complex subunit SPC19 (173 aa).

This sequence belongs to the DASH complex SPC19 family. In terms of assembly, component of the DASH complex consisting of ASK1, DAD1, DAD2, DAD3, DAD4, DAM1, DUO1, HSK3, SPC19 and SPC34, with a stoichiometry of one copy of each subunit per complex. Multiple DASH complexes oligomerize to form a ring that encircles spindle microtubules and organizes the rod-like NDC80 complexes of the outer kinetochore. DASH complex oligomerization strengthens microtubule attachments. On cytoplasmic microtubules, DASH complexes appear to form patches instead of rings.

Its subcellular location is the nucleus. It localises to the cytoplasm. The protein localises to the cytoskeleton. It is found in the spindle. The protein resides in the chromosome. Its subcellular location is the centromere. It localises to the kinetochore. In terms of biological role, component of the DASH complex that connects microtubules with kinetochores and couples microtubule depolymerisation to chromosome movement; it is involved in retrieving kinetochores to the spindle poles before their re-orientation on the spindle in early mitosis and allows microtubule depolymerization to pull chromosomes apart and resist detachment during anaphase. Kinetochores, consisting of a centromere-associated inner segment and a microtubule-contacting outer segment, play a crucial role in chromosome segregation by mediating the physical connection between centromeric DNA and microtubules. Kinetochores also serve as an input point for the spindle assembly checkpoint, which delays anaphase until all chromosomes have bioriented on the mitotic spindle. The polypeptide is DASH complex subunit SPC19 (Chaetomium thermophilum (strain DSM 1495 / CBS 144.50 / IMI 039719) (Thermochaetoides thermophila)).